Reading from the N-terminus, the 256-residue chain is Probable succinate transporter subunit YjjP (256 aa).

Residues Met-1–Arg-113 lie on the Cytoplasmic side of the membrane. Residues Tyr-114 to Asn-135 form a helical membrane-spanning segment. The Periplasmic portion of the chain corresponds to Gly-136–Gly-140. Residues Ala-141–Leu-158 form a helical membrane-spanning segment. The Cytoplasmic segment spans residues Ala-159–Asn-168. Residues Phe-169–Phe-189 form a helical membrane-spanning segment. Residues Ser-190–Thr-194 lie on the Periplasmic side of the membrane. A helical transmembrane segment spans residues Ile-195–Ala-215. Residues Asp-216–Arg-228 are Cytoplasmic-facing. Residues Trp-229–Ile-249 form a helical membrane-spanning segment. Over Trp-250 to Val-256 the chain is Periplasmic.

It belongs to the ThrE exporter (TC 2.A.79) family. In terms of assembly, the transporter is composed of YjjB and YjjP.

The protein resides in the cell inner membrane. Involved in succinate export with YjjB. Both proteins are required for export. Contributes to succinate production under both aerobic and anaerobic conditions. This chain is Probable succinate transporter subunit YjjP (yjjP), found in Escherichia coli (strain K12).